Reading from the N-terminus, the 497-residue chain is COP9 signalosome complex subunit 6 (497 aa).

Residues 21-162 (VALHPLPILE…LTIYESNLEI (142 aa)) form the MPN domain. Disordered stretches follow at residues 230–282 (ATED…KNRD), 324–350 (YLSS…LDQP), and 435–497 (AKNS…RFDH). A compositionally biased stretch (basic and acidic residues) spans 236–246 (SDKPLMKKVVD). 2 stretches are compositionally biased toward low complexity: residues 258 to 272 (SDDA…SSAA) and 333 to 343 (QQQQQQQQQQQ). Basic and acidic residues predominate over residues 440-453 (RREQASHGGGERFN). A compositionally biased stretch (gly residues) spans 475-488 (VGEGSASGSGGSGP).

This sequence belongs to the peptidase M67A family. CSN6 subfamily. As to quaternary structure, component of the COP9 signalosome (CSN) complex.

The protein resides in the cytoplasm. It is found in the nucleus. In terms of biological role, component of the COP9 signalosome (CSN) complex that acts as an regulator of the ubiquitin (Ubl) conjugation pathway by mediating the deneddylation of the cullin subunit of SCF-type E3 ubiquitin-protein ligase complexes. The CSN complex is involved in the regulation of the circadian clock through its control of the stability of the SCF(FWD1) complex. The sequence is that of COP9 signalosome complex subunit 6 (csn-6) from Neurospora crassa (strain ATCC 24698 / 74-OR23-1A / CBS 708.71 / DSM 1257 / FGSC 987).